The chain runs to 789 residues: DEAD-box ATP-dependent RNA helicase 28 (789 aa).

Positions 1–152 (MPSSFFFEDA…AEYKPEDATP (152 aa)) are disordered. Positions 13–66 (DELELIRNQEDSSEEDVKEGEAEEHEAGEDEDGEEEYEEEDDDEEEEDEKRKRD) form a coiled coil. Over residues 23-60 (DSSEEDVKEGEAEEHEAGEDEDGEEEYEEEDDDEEEED) the composition is skewed to acidic residues. Positions 83–99 (GEEHARRHTTSIDEKIS) are enriched in basic and acidic residues. Residues 110-135 (SINEEEEEEEEEEDASDAETDKQEEY) are a coiled coil. Residues 112–127 (NEEEEEEEEEEDASDA) show a composition bias toward acidic residues. The short motif at 167 to 195 (DTFMELNLSRPLLRACETLGYKKPTPIQA) is the Q motif element. The Helicase ATP-binding domain occupies 198 to 372 (IPLALTGRDL…KLSLNKPLRL (175 aa)). Residue 211-218 (AITGSGKT) participates in ATP binding. A DEAD box motif is present at residues 320–323 (DEAD). The region spanning 402–546 (VLLSLCTRTF…SRVIPEQSIV (145 aa)) is the Helicase C-terminal domain. Coiled-coil stretches lie at residues 563–591 (ISAE…HRDE) and 628–677 (SADR…EDEE). The segment at 611–789 (AQAEKDSAGN…FKSKARYKRR (179 aa)) is disordered. The segment covering 628-637 (SADRAEDLKM) has biased composition (basic and acidic residues). The span at 638–656 (KEKRKREREKNLPRKKRRK) shows a compositional bias: basic residues. Residues 665–678 (EDNEGEEEEEDEEG) are compositionally biased toward acidic residues. Basic and acidic residues-rich tracts occupy residues 691-701 (KKQETDKKGLT), 718-734 (RAID…DKKQ), and 743-761 (PRGE…EKKQ). Positions 772-789 (PRTKSKNSFKSKARYKRR) are enriched in basic residues.

The protein belongs to the DEAD box helicase family. DDX27/DRS1 subfamily.

It catalyses the reaction ATP + H2O = ADP + phosphate + H(+). The chain is DEAD-box ATP-dependent RNA helicase 28 (RH28) from Arabidopsis thaliana (Mouse-ear cress).